Reading from the N-terminus, the 894-residue chain is MSEEITTNQTVEEEQQTNQPRLSNENIKQEDEEQQVQEQQEQQQQEQQEQIDDQDTQQQEDEFVVLEETKPVEPIRPTPTLQETPQQQKQQTQEQEHEYQDIVQFIDHKGDIVKEDNKNGRTTFLSTLSNRDDFLTKGFDYSVISILGPQSSGKSTLLNLLFNTRFAVMDASTGRKQTTQGVWMGVASTTNNKNETFLILDVEGTDGRERGEDEKAFERKTSLFSLALSSVLIINMWAHDIGRYNAANISLLKTVFELNLQLFQKKRNHKILIFFLIRDHDGVTPLERLKATLMEDITKLWTDLQKPEEFVGTRESDFFDFEFTTLPHKIYSPTAFLGQVEQLKQRFSDSGADSFIPKRKYRNDDIPADGFYQFSYQVWETIKSNRDLDLPSQKEMLALYRCDEFVEQSMTQFTRDIKPIKEHIERGRIQEQFGEKSKRILDQSLSVYDEPAQRYHLETVQKKRQVLTDRILTELKYLFDKQMERLNENTLVFYNSLIKEFTDSNTGSSSGSGNNNNKKRDGSSVLLTAASVGIIPQFSTWSNGIKKKSIEYFEIVANQSIVPGSDWSFENDLEQLKIKIDKELSILKENQLVRLSKLMRDKTFQQELTPLLTKITEQAPNNMWQKIKTYYDDALSSNEKEFRDRLVDFQLDEQKVNELINKFREQLADGLKNKITERAEFLQMRMRKRFEEKFNMDNRNLPRKWTKTDDIASIFQDARQNAEKLIDLFSYLRLDEEDSNVSFFKRLDNDEHEENTMVNSSKIIIPYKDCCLACENFRLTIKSDYMQALSEQNRLTSGGGVPGYMIILLCVLGFNEFISIISSPLLLLLTILLGGVGFVLFKLGLAGPFIDYSSQILVHFISKVKDIVLHVEQLQEQNHNNNNNNNNTPKQKRE.

Composition is skewed to low complexity over residues 1–10 and 36–48; these read MSEEITTNQT and VQEQ…QEQQ. A disordered region spans residues 1–97; the sequence is MSEEITTNQT…QKQQTQEQEH (97 aa). Over 1–800 the chain is Cytoplasmic; it reads MSEEITTNQT…EQNRLTSGGG (800 aa). Residues 21 to 60 adopt a coiled-coil conformation; the sequence is RLSNENIKQEDEEQQVQEQQEQQQQEQQEQIDDQDTQQQE. The span at 49-65 shows a compositional bias: acidic residues; it reads EQIDDQDTQQQEDEFVV. Over residues 78-93 the composition is skewed to low complexity; it reads TPTLQETPQQQKQQTQ. In terms of domain architecture, GB1/RHD3-type G spans 138 to 361; it reads GFDYSVISIL…ADSFIPKRKY (224 aa). Residue 148–155 coordinates GTP; sequence GPQSSGKS. The chain crosses the membrane as a helical span at residues 801 to 821; the sequence is VPGYMIILLCVLGFNEFISII. At 822–824 the chain is on the lumenal side; that stretch reads SSP. Residues 825–845 form a helical membrane-spanning segment; it reads LLLLLTILLGGVGFVLFKLGL. Topologically, residues 846-894 are cytoplasmic; the sequence is AGPFIDYSSQILVHFISKVKDIVLHVEQLQEQNHNNNNNNNNTPKQKRE.

It belongs to the TRAFAC class dynamin-like GTPase superfamily. GB1/RHD3 GTPase family. RHD3 subfamily.

It localises to the endoplasmic reticulum membrane. Functionally, probable GTP-binding protein that may be involved in cell development. This chain is Protein SEY1 homolog, found in Dictyostelium discoideum (Social amoeba).